The primary structure comprises 279 residues: Dermonecrotic toxin LrSicTox-alphaIA1i (279 aa).

Residue H11 is part of the active site. Positions 31 and 33 each coordinate Mg(2+). H47 acts as the Nucleophile in catalysis. 2 cysteine pairs are disulfide-bonded: C51-C57 and C53-C196. D91 is a binding site for Mg(2+). Residue N256 is glycosylated (N-linked (GlcNAc...) asparagine).

The protein belongs to the arthropod phospholipase D family. Class II subfamily. Requires Mg(2+) as cofactor. As to expression, expressed by the venom gland.

Its subcellular location is the secreted. The catalysed reaction is an N-(acyl)-sphingosylphosphocholine = an N-(acyl)-sphingosyl-1,3-cyclic phosphate + choline. It carries out the reaction an N-(acyl)-sphingosylphosphoethanolamine = an N-(acyl)-sphingosyl-1,3-cyclic phosphate + ethanolamine. It catalyses the reaction a 1-acyl-sn-glycero-3-phosphocholine = a 1-acyl-sn-glycero-2,3-cyclic phosphate + choline. The enzyme catalyses a 1-acyl-sn-glycero-3-phosphoethanolamine = a 1-acyl-sn-glycero-2,3-cyclic phosphate + ethanolamine. Inhibited with low affinity by edelfosine. Functionally, dermonecrotic toxins cleave the phosphodiester linkage between the phosphate and headgroup of certain phospholipids (sphingolipid and lysolipid substrates), forming an alcohol (often choline) and a cyclic phosphate. This toxin acts on sphingomyelin (SM). It also acts on a broad range of lysophospholipids, like lysophosphatidylinositol (LPI), lysophosphatidylglycerol (LPG), lysophosphatidylethanolamine (LPE), lysobisphosphatidic acid (LBPA), lysophosphatidylserine (LPS) and lysophosphatidylcholines (LPC) of varying chain lengths. The substrate preference is LPI &gt; LPG &gt; LPS &gt; LPC &gt;&gt; LPE, LBPA. Furthermore, the enzyme also act on cyclic phosphatidic acid and lyso-platelet activating factor (LPAF, an alkyl-LPC). The enzyme does not act on sphingosylphosphorylcholine (SPC, also known as lyso-sphingomyelin) and PAF. The toxin may also act on ceramide phosphoethanolamine (CPE). It acts by transphosphatidylation, releasing exclusively cyclic phosphate products as second products. It does not exhibit detectable PLA1/2 activity. It induces dose-dependent hemolysis and dermonecrosis. Also induces increased vascular permeability, edema, inflammatory response, and platelet aggregation. The chain is Dermonecrotic toxin LrSicTox-alphaIA1i from Loxosceles reclusa (Brown recluse spider).